The primary structure comprises 620 residues: Glutathione-regulated potassium-efflux system protein KefC (620 aa).

The Periplasmic portion of the chain corresponds to 1-3; that stretch reads MDS. Residues 4-24 form a helical membrane-spanning segment; that stretch reads HTLVQALIYLGSAALIVPIAV. Position 25 (Arg-25) is a topological domain, cytoplasmic. A helical transmembrane segment spans residues 26–46; the sequence is LGLGSVLGYLIAGCIIGPWGL. Residues 47–53 lie on the Periplasmic side of the membrane; it reads RLVTDAE. The helical transmembrane segment at 54 to 74 threads the bilayer; that stretch reads SILHFAEIGVVLMLFIIGLEL. Over 75 to 89 the chain is Cytoplasmic; that stretch reads DPQRLWKLRAAVFGG. Residues 90-110 form a helical membrane-spanning segment; it reads GALQMVICGGLLGLFCMLLGL. Residues 111–113 are Periplasmic-facing; the sequence is RWQ. A helical transmembrane segment spans residues 114–134; sequence VAELIGMTLALSSTAIAMQAM. Topologically, residues 135–148 are cytoplasmic; it reads NERNLMVTQMGRSA. A helical membrane pass occupies residues 149–169; it reads FAVLLFQDIAAIPLVAMIPLL. Over 170–177 the chain is Periplasmic; sequence AASSASTT. Residues 178–198 traverse the membrane as a helical segment; the sequence is MGAFALSALKVAGALVLVVLL. Topologically, residues 199–213 are cytoplasmic; the sequence is GRYVTRPALRFVARS. The helical transmembrane segment at 214 to 233 threads the bilayer; that stretch reads GLREVFSAVALFLVFGFGLL. The Periplasmic portion of the chain corresponds to 234–236; it reads LEE. The helical transmembrane segment at 237–254 threads the bilayer; it reads VGLSMAMGAFLAGVLLAS. The Cytoplasmic portion of the chain corresponds to 255–269; that stretch reads SEYRHALESDIEPFK. A helical transmembrane segment spans residues 270–290; it reads GLLLGLFFIGVGMSIDFGTLI. Topologically, residues 291–293 are periplasmic; the sequence is ENP. A helical transmembrane segment spans residues 294–314; the sequence is LRIVILLLGFLIIKIAMLWLI. Topologically, residues 315–326 are cytoplasmic; sequence ARPLQVPNKQRR. Residues 327–347 traverse the membrane as a helical segment; sequence WFAVLLGQGSEFAFVVFGAAQ. The Periplasmic segment spans residues 348–358; sequence MANVLEPEWAK. A helical membrane pass occupies residues 359 to 379; that stretch reads SLTLAVALSMAATPILLVILN. The Cytoplasmic portion of the chain corresponds to 380 to 620; that stretch reads RLEQSSTEEA…ADEPETKPSS (241 aa). One can recognise an RCK N-terminal domain in the interval 399–518; the sequence is QPRVIIAGFG…AGVEKPERET (120 aa). Residues 597–620 form a disordered region; the sequence is GWQGTEEGKHTGNMADEPETKPSS.

This sequence belongs to the monovalent cation:proton antiporter 2 (CPA2) transporter (TC 2.A.37) family. KefC subfamily. Homodimer. Interacts with the regulatory subunit KefF.

The protein resides in the cell inner membrane. Pore-forming subunit of a potassium efflux system that confers protection against electrophiles. Catalyzes K(+)/H(+) antiport. The polypeptide is Glutathione-regulated potassium-efflux system protein KefC (Shigella flexneri).